The following is a 185-amino-acid chain: piRNA-mediated silencing protein C19orf84 homolog (185 aa).

2 disordered regions span residues 1 to 38 (MDEL…PSLL) and 93 to 185 (HIWP…EADY). Residues 11–25 (NGDNLSLPSAGTESW) are compositionally biased toward polar residues. Over residues 26–38 (PTSATPGLPPSLL) the composition is skewed to low complexity. Basic residues predominate over residues 118-130 (RPSRGWGRGRGRG). Basic and acidic residues predominate over residues 139-150 (GPERAEERERNM).

In terms of assembly, interacts with SPOCD1.

The protein localises to the nucleus. It is found in the nucleoplasm. In terms of biological role, protein adapter involved in piRNA-directed transposon methylation by connecting PIWIL4-piRNA and DNA methylation machineries. The PIWIL4-piRNA pathway plays a central role during spermatogenesis by directing transposon DNA methylation and silencing, thereby preventing their mobilization, which is essential for the germline integrity. In Mus musculus (Mouse), this protein is piRNA-mediated silencing protein C19orf84 homolog.